The chain runs to 653 residues: Rab proteins geranylgeranyltransferase component A 1 (653 aa).

Positions 606-653 (PPPPNPEDIILDGDSLQPEASESSAIPEANSETFKESTNLGNLEESSE) are disordered. The span at 623-646 (PEASESSAIPEANSETFKESTNLG) shows a compositional bias: polar residues.

This sequence belongs to the Rab GDI family. Monomer. Heterotrimer composed of RABGGTA, RABGGTB and CHM; within this trimer, RABGGTA and RABGGTB form the catalytic component B, while CHM (component A) mediates Rab protein binding. Can associate with the Rab GGTase dimer (RGGT or component B) prior to Rab protein binding; the association is stabilized by geranylgeranyl pyrophosphate (GGpp). The CHM:RGGT:Rab complex is destabilized by GGpp. Interacts with RAB1A, RAB1B, RAB5A, RAB7A and RAB27A and mediates their prenylation. Interacts with the non-phosphorylated forms of RAB3A, RAB3B, RAB3C, RAB3D, RAB5B, RAB5C, RAB8A, RAB8B, RAB10, RAB12, RAB35, and RAB43.

It localises to the cytoplasm. It is found in the cytosol. Functionally, substrate-binding subunit of the Rab geranylgeranyltransferase (GGTase) complex. Binds unprenylated Rab proteins and presents the substrate peptide to the catalytic component B composed of RABGGTA and RABGGTB, and remains bound to it after the geranylgeranyl transfer reaction. The component A is thought to be regenerated by transferring its prenylated Rab back to the donor membrane. Besides, a pre-formed complex consisting of CHM and the Rab GGTase dimer (RGGT or component B) can bind to and prenylate Rab proteins; this alternative pathway is proposed to be the predominant pathway for Rab protein geranylgeranylation. This Homo sapiens (Human) protein is Rab proteins geranylgeranyltransferase component A 1 (CHM).